Here is a 274-residue protein sequence, read N- to C-terminus: Penicillin-insensitive murein endopeptidase (274 aa).

The N-terminal stretch at 1-19 (MNKTAIALLALLASSVSLA) is a signal peptide. Intrachain disulfides connect Cys-44-Cys-265, Cys-187-Cys-235, and Cys-216-Cys-223. Residues His-110, His-113, Asp-120, Asp-147, His-150, and His-211 each coordinate Zn(2+). The segment at 227–274 (PLPPPGDGCGAELQSWFEPPKPGTTKPEKKTPPPLPPSCQALLDEHVI) is disordered.

This sequence belongs to the peptidase M74 family. In terms of assembly, dimer. Zn(2+) serves as cofactor.

It is found in the periplasm. In terms of biological role, murein endopeptidase that cleaves the D-alanyl-meso-2,6-diamino-pimelyl amide bond that connects peptidoglycan strands. Likely plays a role in the removal of murein from the sacculus. This Escherichia coli O157:H7 protein is Penicillin-insensitive murein endopeptidase.